A 246-amino-acid chain; its full sequence is UDP-2,3-diacylglucosamine hydrolase (246 aa).

The Mn(2+) site is built by aspartate 8, histidine 10, aspartate 41, asparagine 79, and histidine 114. 79-80 provides a ligand contact to substrate; the sequence is NR. Positions 122, 164, 167, and 195 each coordinate substrate. Histidine 195 and histidine 197 together coordinate Mn(2+).

It belongs to the LpxH family. The cofactor is Mn(2+).

The protein resides in the cell inner membrane. It carries out the reaction UDP-2-N,3-O-bis[(3R)-3-hydroxytetradecanoyl]-alpha-D-glucosamine + H2O = 2-N,3-O-bis[(3R)-3-hydroxytetradecanoyl]-alpha-D-glucosaminyl 1-phosphate + UMP + 2 H(+). The protein operates within glycolipid biosynthesis; lipid IV(A) biosynthesis; lipid IV(A) from (3R)-3-hydroxytetradecanoyl-[acyl-carrier-protein] and UDP-N-acetyl-alpha-D-glucosamine: step 4/6. In terms of biological role, hydrolyzes the pyrophosphate bond of UDP-2,3-diacylglucosamine to yield 2,3-diacylglucosamine 1-phosphate (lipid X) and UMP by catalyzing the attack of water at the alpha-P atom. Involved in the biosynthesis of lipid A, a phosphorylated glycolipid that anchors the lipopolysaccharide to the outer membrane of the cell. The polypeptide is UDP-2,3-diacylglucosamine hydrolase (Vibrio cholerae serotype O1 (strain ATCC 39541 / Classical Ogawa 395 / O395)).